The chain runs to 158 residues: Class 10 plant pathogenesis-related protein 2B (158 aa).

Residue aspartate 8 coordinates trans-zeatin. Ca(2+)-binding residues include proline 32, valine 35, and isoleucine 38. Trans-zeatin-binding residues include glutamate 60, histidine 69, tyrosine 81, and tyrosine 83. A melatonin-binding site is contributed by tyrosine 83.

It belongs to the BetVI family.

The protein localises to the cytoplasm. It is found in the cytosol. Its function is as follows. Class II ribonuclease (RNase). Binds to several cytokinins including natural adenine-type (e.g. trans-zeatin and kinetin) and artificial urea-type (e.g. N,N'-diphenylurea and N-phenyl-N'-(2-chloro-4-pyridyl)urea) hormones. Interacts with melatonin. The polypeptide is Class 10 plant pathogenesis-related protein 2B (Lupinus luteus (European yellow lupine)).